The following is a 141-amino-acid chain: Nucleoside diphosphate kinase (141 aa).

ATP is bound by residues K11, F59, R87, T93, R104, and N114. H117 acts as the Pros-phosphohistidine intermediate in catalysis.

The protein belongs to the NDK family. In terms of assembly, homotetramer. Mg(2+) serves as cofactor.

It localises to the cytoplasm. The catalysed reaction is a 2'-deoxyribonucleoside 5'-diphosphate + ATP = a 2'-deoxyribonucleoside 5'-triphosphate + ADP. The enzyme catalyses a ribonucleoside 5'-diphosphate + ATP = a ribonucleoside 5'-triphosphate + ADP. Its function is as follows. Major role in the synthesis of nucleoside triphosphates other than ATP. The ATP gamma phosphate is transferred to the NDP beta phosphate via a ping-pong mechanism, using a phosphorylated active-site intermediate. The sequence is that of Nucleoside diphosphate kinase from Bordetella bronchiseptica (strain ATCC BAA-588 / NCTC 13252 / RB50) (Alcaligenes bronchisepticus).